The primary structure comprises 227 residues: Uracil-DNA glycosylase (227 aa).

Residue D68 is the Proton acceptor of the active site.

The protein belongs to the uracil-DNA glycosylase (UDG) superfamily. UNG family.

Its subcellular location is the cytoplasm. It carries out the reaction Hydrolyzes single-stranded DNA or mismatched double-stranded DNA and polynucleotides, releasing free uracil.. Excises uracil residues from the DNA which can arise as a result of misincorporation of dUMP residues by DNA polymerase or due to deamination of cytosine. This is Uracil-DNA glycosylase from Mycolicibacterium paratuberculosis (strain ATCC BAA-968 / K-10) (Mycobacterium paratuberculosis).